We begin with the raw amino-acid sequence, 473 residues long: Siroheme synthase (473 aa).

The tract at residues 1–203 is precorrin-2 dehydrogenase /sirohydrochlorin ferrochelatase; sequence MTLFPIFADL…QQPGLAEQEL (203 aa). NAD(+) contacts are provided by residues 22–23 and 43–44; these read AV and PR. Position 128 is a phosphoserine (Ser128). The uroporphyrinogen-III C-methyltransferase stretch occupies residues 216–473; the sequence is GSVVLVGAGP…GLPGPQALAA (258 aa). Pro225 provides a ligand contact to S-adenosyl-L-methionine. Asp248 (proton acceptor) is an active-site residue. The Proton donor role is filled by Lys270. Residues 302–304, Ile307, 332–333, Met384, and Gly413 contribute to the S-adenosyl-L-methionine site; these read GGD and TA.

This sequence in the N-terminal section; belongs to the precorrin-2 dehydrogenase / sirohydrochlorin ferrochelatase family. In the C-terminal section; belongs to the precorrin methyltransferase family.

It catalyses the reaction uroporphyrinogen III + 2 S-adenosyl-L-methionine = precorrin-2 + 2 S-adenosyl-L-homocysteine + H(+). The enzyme catalyses precorrin-2 + NAD(+) = sirohydrochlorin + NADH + 2 H(+). It carries out the reaction siroheme + 2 H(+) = sirohydrochlorin + Fe(2+). Its pathway is cofactor biosynthesis; adenosylcobalamin biosynthesis; precorrin-2 from uroporphyrinogen III: step 1/1. The protein operates within cofactor biosynthesis; adenosylcobalamin biosynthesis; sirohydrochlorin from precorrin-2: step 1/1. It participates in porphyrin-containing compound metabolism; siroheme biosynthesis; precorrin-2 from uroporphyrinogen III: step 1/1. It functions in the pathway porphyrin-containing compound metabolism; siroheme biosynthesis; siroheme from sirohydrochlorin: step 1/1. Its pathway is porphyrin-containing compound metabolism; siroheme biosynthesis; sirohydrochlorin from precorrin-2: step 1/1. Functionally, multifunctional enzyme that catalyzes the SAM-dependent methylations of uroporphyrinogen III at position C-2 and C-7 to form precorrin-2 via precorrin-1. Then it catalyzes the NAD-dependent ring dehydrogenation of precorrin-2 to yield sirohydrochlorin. Finally, it catalyzes the ferrochelation of sirohydrochlorin to yield siroheme. The sequence is that of Siroheme synthase from Bordetella parapertussis (strain 12822 / ATCC BAA-587 / NCTC 13253).